Consider the following 735-residue polypeptide: MSEFGAGAELPGWVTESRSRGEFFSPEESHAAAPAGFLQELPSYRSVLWRRAAAGDVQERWGNLRGIASAERREPQPDGGERGAIPLWELPFSIAEKRDSQQGDIKYSSGWNHWKRTSSKSWKKALKDIKELSSYMQLWRHDIHSIEGKFGTGIQSYFSFLRFLVLLNFLMFILMFSFVTLPAVISNYGIFNSSSTKISPNNTEPYCTVYTPSGNKGLVYFYTYLKDLLTGTGFLEVTVLFYGYYTIDAAWFSVLRYNLPLAYLLTTFAYLALSFVWIIKRSVERFRQHLVDDEDQFQSYCNKVFAGWDFCITDLNAARLKHRSLLYELQTNLEEERLKQKIAERTMKEKLQIYSLRIFINIIVIAVLSGCFYSIYRATVFSQENSSVSIRRNVMIANLLVQYLPSIVITSANFIAPQIFSFLIRFEDYSAAFEIRLTLIRCVFVRLANVGVLLFSLWSQIHCDNDQCKACGYDYELYPCWESAVGQEMYKLLIFDFMIIIAMTLFVDFPRKLLVTYCSWKLVQWWGLQEFGISDNVLEIIYGQTICWIGTFFSPLLPAIATIKYFIIFYIKKISLIHTRKPASRPIRASSSNFFFLAVLLIGLILAFVPLGVSIALISSSKACGPFRNFNTSWAIVPYTILEFPIGLQKFLYGIASEAFAVPFFVIACLFMFYFIALAGAHKRVVEQLREQLVTESRDKLFLLEKLSEAQKNSGKPQKARKLTSSWLLEPLDKG.

Topologically, residues 1–164 (MSEFGAGAEL…QSYFSFLRFL (164 aa)) are extracellular. A helical transmembrane segment spans residues 165–185 (VLLNFLMFILMFSFVTLPAVI). The Cytoplasmic portion of the chain corresponds to 186 to 233 (SNYGIFNSSSTKISPNNTEPYCTVYTPSGNKGLVYFYTYLKDLLTGTG). Residues 234–254 (FLEVTVLFYGYYTIDAAWFSV) traverse the membrane as a helical segment. The Extracellular portion of the chain corresponds to 255 to 258 (LRYN). The chain crosses the membrane as a helical span at residues 259–279 (LPLAYLLTTFAYLALSFVWII). At 280–355 (KRSVERFRQH…TMKEKLQIYS (76 aa)) the chain is on the cytoplasmic side. A helical transmembrane segment spans residues 356 to 376 (LRIFINIIVIAVLSGCFYSIY). The Extracellular portion of the chain corresponds to 377 to 403 (RATVFSQENSSVSIRRNVMIANLLVQY). N-linked (GlcNAc...) asparagine glycosylation occurs at Asn385. The chain crosses the membrane as a helical span at residues 404–424 (LPSIVITSANFIAPQIFSFLI). The Cytoplasmic segment spans residues 425-436 (RFEDYSAAFEIR). A helical membrane pass occupies residues 437-457 (LTLIRCVFVRLANVGVLLFSL). Topologically, residues 458–488 (WSQIHCDNDQCKACGYDYELYPCWESAVGQE) are extracellular. A helical membrane pass occupies residues 489 to 509 (MYKLLIFDFMIIIAMTLFVDF). Topologically, residues 510-548 (PRKLLVTYCSWKLVQWWGLQEFGISDNVLEIIYGQTICW) are cytoplasmic. The helical transmembrane segment at 549–569 (IGTFFSPLLPAIATIKYFIIF) threads the bilayer. Over 570 to 594 (YIKKISLIHTRKPASRPIRASSSNF) the chain is Extracellular. Residues 595–615 (FFLAVLLIGLILAFVPLGVSI) traverse the membrane as a helical segment. Over 616 to 634 (ALISSSKACGPFRNFNTSW) the chain is Cytoplasmic. Residues 635-655 (AIVPYTILEFPIGLQKFLYGI) form a helical membrane-spanning segment. Topologically, residues 656-658 (ASE) are extracellular. The helical transmembrane segment at 659 to 679 (AFAVPFFVIACLFMFYFIALA) threads the bilayer. The Cytoplasmic segment spans residues 680–735 (GAHKRVVEQLREQLVTESRDKLFLLEKLSEAQKNSGKPQKARKLTSSWLLEPLDKG). The disordered stretch occupies residues 710 to 735 (AQKNSGKPQKARKLTSSWLLEPLDKG).

Belongs to the TMC family.

Its subcellular location is the membrane. Probable component of an ion channel. This is Transmembrane channel-like protein 7 (Tmc7) from Gallus gallus (Chicken).